We begin with the raw amino-acid sequence, 987 residues long: Ephrin type-B receptor 4 (987 aa).

An N-terminal signal peptide occupies residues 1 to 15 (MELRVLLCWASLAAA). Residues 16–539 (LEETLLNTKL…ESEGWREQLA (524 aa)) are Extracellular-facing. Residues 17–202 (EETLLNTKLE…FYKKCAQLTV (186 aa)) form the Eph LBD domain. Disulfide bonds link C61–C184 and C97–C107. N-linked (GlcNAc...) asparagine glycosylation is found at N203, N335, and N426. 2 consecutive Fibronectin type-III domains span residues 323 to 432 (PPSA…TDRE) and 436 to 529 (AVSD…TQLD). A helical transmembrane segment spans residues 540-560 (LIAGTAVVGVVLVLVVIVVAV). Topologically, residues 561–987 (LCLRKQSNGR…GGTGGPAPQY (427 aa)) are cytoplasmic. In terms of domain architecture, Protein kinase spans 615 to 899 (VKIEEVIGAG…ENGGASHPLL (285 aa)). Residues 621–629 (IGAGEFGEV) and K647 contribute to the ATP site. The active-site Proton acceptor is D740. Residues S769, S770, S911, and S943 each carry the phosphoserine modification. Positions 907 to 971 (SAFGSVGEWL…LASVQHMKSQ (65 aa)) constitute an SAM domain. The tract at residues 965–987 (VQHMKSQAKPGTPGGTGGPAPQY) is disordered. Residue T976 is modified to Phosphothreonine. Residues 976–987 (TPGGTGGPAPQY) show a composition bias toward gly residues. Residues 985-987 (PQY) carry the PDZ-binding motif. Residue Y987 is modified to Phosphotyrosine.

This sequence belongs to the protein kinase superfamily. Tyr protein kinase family. Ephrin receptor subfamily. In terms of assembly, heterotetramer upon binding of the ligand. The heterotetramer is composed of an ephrin dimer and a receptor dimer. Oligomerization is probably required to induce biological responses. Interacts with RASA1; the interaction depends on EPHB4 tyrosine-phosphorylation. Phosphorylated; autophosphorylation is stimulated by EFNB2. As to expression, abundantly expressed in placenta but also detected in kidney, liver, lung, pancreas, skeletal muscle and heart. Expressed in primitive and myeloid, but not lymphoid, hematopoietic cells. Also observed in cell lines derived from liver, breast, colon, lung, melanocyte and cervix.

Its subcellular location is the cell membrane. The catalysed reaction is L-tyrosyl-[protein] + ATP = O-phospho-L-tyrosyl-[protein] + ADP + H(+). Receptor tyrosine kinase which binds promiscuously transmembrane ephrin-B family ligands residing on adjacent cells, leading to contact-dependent bidirectional signaling into neighboring cells. The signaling pathway downstream of the receptor is referred to as forward signaling while the signaling pathway downstream of the ephrin ligand is referred to as reverse signaling. Together with its cognate ligand/functional ligand EFNB2 it is involved in the regulation of cell adhesion and migration, and plays a central role in heart morphogenesis, angiogenesis and blood vessel remodeling and permeability. EPHB4-mediated forward signaling controls cellular repulsion and segregation from EFNB2-expressing cells. The protein is Ephrin type-B receptor 4 (EPHB4) of Homo sapiens (Human).